The sequence spans 325 residues: Pyruvate dehydrogenase E1 component subunit beta (325 aa).

Thiamine diphosphate is bound at residue E60.

Heterodimer of an alpha and a beta chain. Thiamine diphosphate serves as cofactor.

It carries out the reaction N(6)-[(R)-lipoyl]-L-lysyl-[protein] + pyruvate + H(+) = N(6)-[(R)-S(8)-acetyldihydrolipoyl]-L-lysyl-[protein] + CO2. In terms of biological role, the pyruvate dehydrogenase complex catalyzes the overall conversion of pyruvate to acetyl-CoA and CO(2). It contains multiple copies of three enzymatic components: pyruvate dehydrogenase (E1), dihydrolipoamide acetyltransferase (E2) and lipoamide dehydrogenase (E3). The chain is Pyruvate dehydrogenase E1 component subunit beta (pdhB) from Geobacillus stearothermophilus (Bacillus stearothermophilus).